We begin with the raw amino-acid sequence, 3081 residues long: Cilia- and flagella-associated protein 54 (3081 aa).

Disordered regions lie at residues 542 to 579, 591 to 626, 910 to 942, 1406 to 1451, 1518 to 1586, 1636 to 1657, 2176 to 2210, 2229 to 2306, and 2776 to 2806; these read SGTA…AGGA, TQTA…QSSL, PPQP…GARK, ADAP…GITP, ESIL…YPVV, RRAA…EERP, GERT…LPEP, MASG…SQRA, and ARPV…SGDG. A compositionally biased stretch (low complexity) spans 564 to 579; the sequence is GGSASPPNGSSGAGGA. Pro residues predominate over residues 1428–1449; sequence MPPPVPDPSAAGPPPLTPPEGI. The span at 1538–1550 shows a compositional bias: basic and acidic residues; it reads GGKDDKKKDDKAP. Composition is skewed to low complexity over residues 1638–1648, 2181–2199, and 2240–2269; these read AALAASASTAG, APKP…AAAA, and EPSS…SPTG. Positions 2289–2301 are enriched in pro residues; that stretch reads PEVPGPPPPPPPS. Positions 2776–2788 are enriched in low complexity; the sequence is ARPVATSSSGARP. Residues 2796–2805 are compositionally biased toward gly residues; sequence KPGAGGGSGD.

Belongs to the CFAP54 family. In terms of assembly, part of the PDCP1 complex composed of CFAP46, CFAP54, CFAP74 and CFAP221; the PDCP1 complex binds calmodulin.

Its subcellular location is the cytoplasm. The protein resides in the cytoskeleton. It localises to the cilium axoneme. The chain is Cilia- and flagella-associated protein 54 from Chlamydomonas reinhardtii (Chlamydomonas smithii).